We begin with the raw amino-acid sequence, 547 residues long: Glucose-6-phosphate isomerase (547 aa).

Catalysis depends on Glu-351, which acts as the Proton donor. Active-site residues include His-382 and Lys-509.

It belongs to the GPI family.

The protein resides in the cytoplasm. The catalysed reaction is alpha-D-glucose 6-phosphate = beta-D-fructose 6-phosphate. It participates in carbohydrate biosynthesis; gluconeogenesis. Its pathway is carbohydrate degradation; glycolysis; D-glyceraldehyde 3-phosphate and glycerone phosphate from D-glucose: step 2/4. Catalyzes the reversible isomerization of glucose-6-phosphate to fructose-6-phosphate. The protein is Glucose-6-phosphate isomerase of Coxiella burnetii (strain CbuK_Q154) (Coxiella burnetii (strain Q154)).